Reading from the N-terminus, the 597-residue chain is Sodium/mannose cotransporter SLC5A10 (597 aa).

The Extracellular segment spans residues 1 to 16; it reads MAVDNSTSDAHTPGRQ. N-linked (GlcNAc...) asparagine glycosylation is present at asparagine 5. The chain crosses the membrane as a helical span at residues 17 to 37; that stretch reads LTVVDIAIIAVYFALNVAVGI. Over 38–73 the chain is Cytoplasmic; sequence WSSCRASRNTVRGYFLAGRDMTWWPIGASLFASSEG. The chain crosses the membrane as a helical span at residues 74-94; the sequence is SGLFIGLAGSGAAGGLAVAGF. Topologically, residues 95–100 are extracellular; it reads EWNATY. Asparagine 97 is a glycosylation site (N-linked (GlcNAc...) asparagine). A helical transmembrane segment spans residues 101-121; it reads VLLALAWVFVPIYLSSEIVTM. Topologically, residues 122–139 are cytoplasmic; that stretch reads PEYMQKRYGGQRIRMYLS. Residues 140-162 traverse the membrane as a helical segment; the sequence is VLSLLLSVFTKISIDLYAGALFV. Topologically, residues 163–174 are extracellular; it reads HICLGWNFYLST. The helical transmembrane segment at 175–195 threads the bilayer; sequence VIMLAITALYTIAGGLTAVIY. The Cytoplasmic segment spans residues 196-201; the sequence is TDALQT. The chain crosses the membrane as a helical span at residues 202–222; that stretch reads LVMVAGAVILTIKAFEQIGGY. The Extracellular portion of the chain corresponds to 223–265; the sequence is EQLAEAYAQAVPSRTISNTTCHVPRADAMHMFRDPYTADLPWT. A helical transmembrane segment spans residues 266 to 286; that stretch reads GMTFGLTIMAAWYWCTDQVIV. The Cytoplasmic portion of the chain corresponds to 287–301; it reads QRSLSARDLNHAKGG. The chain crosses the membrane as a helical span at residues 302-322; sequence SILASYLKMLPMGLMVMPGMI. Residues 323 to 367 lie on the Extracellular side of the membrane; it reads SRVLFPDDVGCVVPAECLRACGAEIGCSNIAYPKLVMELMPTGLR. A helical transmembrane segment spans residues 368–388; that stretch reads GLMVAVMMAALMSSLTSIFNS. The Cytoplasmic segment spans residues 389-410; it reads SSTLFTMDIWRRLRPRAGEREL. Residues 411–431 traverse the membrane as a helical segment; the sequence is LLVGRLVIVVLVGVSVAWIPV. The Extracellular segment spans residues 432-444; the sequence is LQGSNGGQLFIYM. A helical membrane pass occupies residues 445-465; sequence QSVTSSLAPPVTAVFVLGIFW. At 466–472 the chain is on the cytoplasmic side; that stretch reads RRANEQG. A helical transmembrane segment spans residues 473–493; the sequence is AFWGLMAGLAVGATRLVLEFL. Over 494-514 the chain is Extracellular; that stretch reads HPAPPCGHPDTRPPILHGVHY. The chain crosses the membrane as a helical span at residues 515-535; it reads LHFAVALFLLSGAVVVAGSLL. Over 536–576 the chain is Cytoplasmic; that stretch reads TPHPQGVQIQSLTWWTLAQDLPLGVKTGDGRASQRHAFWAR. A helical membrane pass occupies residues 577–597; sequence VCGVNAILLMCVNIFFYTYFA.

This sequence belongs to the sodium:solute symporter (SSF) (TC 2.A.21) family. Predominantyl expressed in kidney. Also detected at very low levels in testes, skeletal muscle, and spleen.

It is found in the apical cell membrane. The catalysed reaction is D-mannose(out) + Na(+)(out) = D-mannose(in) + Na(+)(in). It catalyses the reaction D-fructopyranose(out) + Na(+)(out) = D-fructopyranose(in) + Na(+)(in). Functionally, electrogenic Na+-coupled sugar symporter that actively transports D-mannose or D-fructose at the plasma membrane, with a Na+ to sugar coupling ratio of 1:1. Transporter activity is driven by a transmembrane Na+ electrochemical gradient set by the Na+/K+ pump. Exclusively recognizes sugar substrates having a pyranose ring with an axial hydroxyl group on carbon 2. Has likely evolved to enable renal reabsorption of D-mannose, an important constituent of oligosaccharide chains of glycoproteins. Contributes to dietary D-fructose reabsorption from glomerular filtrate across the brush border of the kidney. The protein is Sodium/mannose cotransporter SLC5A10 (SLC5A10) of Bos taurus (Bovine).